Here is a 113-residue protein sequence, read N- to C-terminus: MQSLLVFCLATIILSNFTEASADLETASQSLKHPRNLGWKAPEGHREKRYGGWGGGYPYGGYGGYGGGYGGGYGGGYGGGYGGRYGGNYGSSSWGSYSSYSSGGYSSYNSGFW.

Residues 1-22 (MQSLLVFCLATIILSNFTEASA) form the signal peptide.

The chain is Protein suex-1 from Caenorhabditis elegans.